Here is a 185-residue protein sequence, read N- to C-terminus: Putative manganese efflux pump MntP (185 aa).

6 helical membrane passes run 4 to 24 (LFIG…TDAF), 40 to 60 (IFHI…AGMA), 64 to 84 (LLSG…LFIL), 108 to 128 (LLLF…SLGM), 134 to 154 (FLAV…GLLA), and 165 to 185 (YSEA…LLPV).

It belongs to the MntP (TC 9.B.29) family.

The protein resides in the cell membrane. Functionally, probably functions as a manganese efflux pump. In Bacillus velezensis (strain DSM 23117 / BGSC 10A6 / LMG 26770 / FZB42) (Bacillus amyloliquefaciens subsp. plantarum), this protein is Putative manganese efflux pump MntP.